The sequence spans 304 residues: Ribonuclease Z (304 aa).

H61, H63, D65, H66, H138, D206, and H265 together coordinate Zn(2+). D65 serves as the catalytic Proton acceptor.

This sequence belongs to the RNase Z family. Homodimer. Zn(2+) serves as cofactor.

The catalysed reaction is Endonucleolytic cleavage of RNA, removing extra 3' nucleotides from tRNA precursor, generating 3' termini of tRNAs. A 3'-hydroxy group is left at the tRNA terminus and a 5'-phosphoryl group is left at the trailer molecule.. Zinc phosphodiesterase, which displays some tRNA 3'-processing endonuclease activity. Probably involved in tRNA maturation, by removing a 3'-trailer from precursor tRNA. This Lachnoclostridium phytofermentans (strain ATCC 700394 / DSM 18823 / ISDg) (Clostridium phytofermentans) protein is Ribonuclease Z.